The sequence spans 393 residues: Argininosuccinate synthase (393 aa).

Residues 7–15 and Ala34 contribute to the ATP site; that span reads AYSGGLDTS. Residues Tyr85 and Ser90 each coordinate L-citrulline. Position 115 (Gly115) interacts with ATP. L-aspartate is bound by residues Thr117, Asn121, and Asp122. Residue Asn121 participates in L-citrulline binding. 5 residues coordinate L-citrulline: Arg125, Ser176, Ser185, Glu261, and Tyr273.

It belongs to the argininosuccinate synthase family. Type 1 subfamily. As to quaternary structure, homotetramer.

Its subcellular location is the cytoplasm. The catalysed reaction is L-citrulline + L-aspartate + ATP = 2-(N(omega)-L-arginino)succinate + AMP + diphosphate + H(+). The protein operates within amino-acid biosynthesis; L-arginine biosynthesis; L-arginine from L-ornithine and carbamoyl phosphate: step 2/3. The sequence is that of Argininosuccinate synthase from Ehrlichia chaffeensis (strain ATCC CRL-10679 / Arkansas).